The sequence spans 101 residues: uncharacterized protein (101 aa).

2 helical membrane-spanning segments follow: residues 3-23 and 39-59; these read IVYEYAISTNWIWLYVWLFLF and AFLSLPPIVSFALSVATLIFF.

The protein resides in the membrane. This is an uncharacterized protein from Saccharomyces cerevisiae (strain ATCC 204508 / S288c) (Baker's yeast).